The primary structure comprises 693 residues: MATSGANGPGSATASASNPRKFSEKIALQKQRQAEETAAFEEVMMDIGSTRLQAQKLRLAYTRSSHYGGSLPNVNQIGSGLAEFQSPLHSPLDSSRSTRHHGLVERVQRDPRRMVSPLRRYTRHIDSSPYSPAYLSPPPESSWRRTMAWGNFPAEKGQLFRLPSALNRTSSDSALHTSVMNPSPQDTYPGPTPPSILPSRRGGILDGEMDPKVPAIEENLLDDKHLLKPWDAKKLSSSSSRPRSCEVPGINIFPSPDQPANVPVLPPAMNTGGSLPDLTNLHFPPPLPTPLDPEETAYPSLSGGNSTSNLTHTMTHLGISRGMGLGPGYDAPGLHSPLSHPSLQSSLSNPNLQASLSSPQPQLQGSHSHPSLPASSLARHVLPTTSLGHPSLSAPALSSSSSSSSTSSPVLGAPSYPASTPGASPHHRRVPLSPLSLLAGPADARRSQQQLPKQFSPTMSPTLSSITQGVPLDTSKLSTDQRLPPYPYSSPSLVLPTQPHTPKSLQQPGLPSQSCSVQSSGGQPPGRQSHYGTPYPPGPSGHGQQSYHRPMSDFNLGNLEQFSMESPSASLVLDPPGFSEGPGFLGGEGPMGGPQDPHTFNHQNLTHCSRHGSGPNIILTGDSSPGFSKEIAAALAGVPGFEVSAAGLELGLGLEDELRMEPLGLEGLNMLSDPCALLPDPAVEESFRSDRLQ.

Residues 1–20 (MATSGANGPGSATASASNPR) are compositionally biased toward polar residues. Positions 1–30 (MATSGANGPGSATASASNPRKFSEKIALQK) are disordered. A2 carries the N-acetylalanine modification. R51 carries the asymmetric dimethylarginine; by PRMT6 modification. Phosphoserine is present on residues S70, S86, and S90. An asymmetric dimethylarginine; by PRMT6 mark is found at R99, R120, and R123. S136 carries the post-translational modification Phosphoserine. 2 positions are modified to asymmetric dimethylarginine; by PRMT6: R161 and R168. Residue T169 is modified to Phosphothreonine. The residue at position 171 (S171) is a Phosphoserine; by AMPK, MARK2, SIK1 and SIK2. Position 192 is a phosphothreonine (T192). A Glycyl lysine isopeptide (Lys-Gly) (interchain with G-Cter in SUMO2) cross-link involves residue K234. The Nuclear export signal motif lies at 271–287 (TGGSLPDLTNLHFPPPL). At S274 the chain carries Phosphoserine; by MARK2. 2 disordered regions span residues 282–306 (HFPPPLPTPLDPEETAYPSLSGGNS) and 328–554 (GYDA…MSDF). S306, S368, S393, S433, and S456 each carry phosphoserine. Low complexity-rich tracts occupy residues 331–378 (APGL…SSLA) and 386–415 (SLGHPSLSAPALSSSSSSSSTSSPVLGAPS). Positions 447-468 (SQQQLPKQFSPTMSPTLSSITQ) are enriched in polar residues. Position 488 is a phosphotyrosine (Y488). S489, S490, and S492 each carry phosphoserine. A compositionally biased stretch (polar residues) spans 498-507 (QPHTPKSLQQ). At T501 the chain carries Phosphothreonine. Residues 509 to 529 (GLPSQSCSVQSSGGQPPGRQS) show a composition bias toward low complexity. Phosphoserine occurs at positions 613, 623, and 624.

It belongs to the TORC family. As to quaternary structure, binds, as a tetramer, through its N-terminal region, with the bZIP domain of CREB1. 'Arg-314' in the bZIP domain of CREB1 is essential for this interaction. Interaction, via its C-terminal, with TAF4, enhances recruitment of TAF4 to CREB1. Interacts with SIK2. Interacts with 14-3-3 proteins, YWHAB and YWHAG. Interacts (probably when phosphorylated at Ser-171) with YWHAE. Interacts with calmodulin-dependent catalytic subunit PPP3CA/calcineurin A. Interaction with COP1 mediates nuclear export and degradation of CRTC2. In terms of assembly, (Microbial infection) Interaction with the human T-cell leukemia virus type 1 (HTLV-1) Tax protein is essential for optimal transcription activation by Tax. Phosphorylation/dephosphorylation states of Ser-171 are required for regulating transduction of CREB activity. CRTCs/TORCs are inactive when phosphorylated, and active when dephosphorylated at this site. This primary site of phosphorylation, is regulated by cAMP and calcium levels and is dependent on the phosphorylation of SIKs (SIK1 and SIK2) by LKB1. Following adenylyl cyclase activation, dephosphorylated at Ser-171 by PPP3CA/calcineurin A resulting in CRTC2 dissociation from 14-3-3 proteins and PPP3CA. Both insulin and AMPK increase this phosphorylation of CRTC2 while glucagon suppresses it. Phosphorylation at Ser-274 by MARK2 is induced under low glucose conditions and dephosphorylated in response to glucose influx. Phosphorylation at Ser-274 promotes interaction with 14-3-3 proteins and translocation to the cytoplasm. In terms of processing, asymmetric dimethylation of arginine resisues by PRMT6 enhances the association of CRTC2 with CREB on the promoters of gluconeogenic genes. In terms of tissue distribution, most abundantly expressed in the thymus. Present in both B and T-lymphocytes. Highly expressed in HEK293T cells and in insulinomas. High levels also in spleen, ovary, muscle and lung, with highest levels in muscle. Lower levels found in brain, colon, heart, kidney, prostate, small intestine and stomach. Weak expression in liver and pancreas.

The protein resides in the cytoplasm. Its subcellular location is the nucleus. Transcriptional coactivator for CREB1 which activates transcription through both consensus and variant cAMP response element (CRE) sites. Acts as a coactivator, in the SIK/TORC signaling pathway, being active when dephosphorylated and acts independently of CREB1 'Ser-133' phosphorylation. Enhances the interaction of CREB1 with TAF4. Regulates gluconeogenesis as a component of the LKB1/AMPK/TORC2 signaling pathway. Regulates the expression of specific genes such as the steroidogenic gene, StAR. Potent coactivator of PPARGC1A and inducer of mitochondrial biogenesis in muscle cells. Also coactivator for TAX activation of the human T-cell leukemia virus type 1 (HTLV-1) long terminal repeats (LTR). The chain is CREB-regulated transcription coactivator 2 (CRTC2) from Homo sapiens (Human).